A 189-amino-acid chain; its full sequence is HGPRTase-like protein 2 (189 aa).

It belongs to the purine/pyrimidine phosphoribosyltransferase family. Archaeal HPRT subfamily.

Its function is as follows. May catalyze a purine salvage reaction, the substrate is unknown. In Halalkalicoccus jeotgali (strain DSM 18796 / CECT 7217 / JCM 14584 / KCTC 4019 / B3), this protein is HGPRTase-like protein 2.